An 86-amino-acid polypeptide reads, in one-letter code: Large ribosomal subunit protein bL27 (86 aa).

This sequence belongs to the bacterial ribosomal protein bL27 family.

This chain is Large ribosomal subunit protein bL27, found in Flavobacterium johnsoniae (strain ATCC 17061 / DSM 2064 / JCM 8514 / BCRC 14874 / CCUG 350202 / NBRC 14942 / NCIMB 11054 / UW101) (Cytophaga johnsonae).